The chain runs to 443 residues: Tol-Pal system protein TolB (443 aa).

The signal sequence occupies residues 1 to 31 (MMIMTTRTFFSWFIVICAFWLTSFSSVPVHA). Residues 422 to 443 (ERQLPTPNDASDPAWSPLLNIQ) are disordered.

It belongs to the TolB family. The Tol-Pal system is composed of five core proteins: the inner membrane proteins TolA, TolQ and TolR, the periplasmic protein TolB and the outer membrane protein Pal. They form a network linking the inner and outer membranes and the peptidoglycan layer.

The protein resides in the periplasm. Its function is as follows. Part of the Tol-Pal system, which plays a role in outer membrane invagination during cell division and is important for maintaining outer membrane integrity. The protein is Tol-Pal system protein TolB of Bartonella henselae (strain ATCC 49882 / DSM 28221 / CCUG 30454 / Houston 1) (Rochalimaea henselae).